Reading from the N-terminus, the 292-residue chain is 6-phospho-5-dehydro-2-deoxy-D-gluconate aldolase (292 aa).

Asp85 acts as the Proton donor in catalysis. The Zn(2+) site is built by His86 and His180. Gly181 lines the dihydroxyacetone phosphate pocket. His208 serves as a coordination point for Zn(2+). Dihydroxyacetone phosphate is bound by residues 209 to 211 (GAS) and 230 to 233 (NINT). Thr233 is modified (phosphothreonine).

It belongs to the class II fructose-bisphosphate aldolase family. IolJ subfamily. Zn(2+) is required as a cofactor.

It carries out the reaction 6-phospho-5-dehydro-2-deoxy-D-gluconate = 3-oxopropanoate + dihydroxyacetone phosphate. It functions in the pathway polyol metabolism; myo-inositol degradation into acetyl-CoA; acetyl-CoA from myo-inositol: step 6/7. Its function is as follows. Produces dihydroxyacetone phosphate (DHAP or glycerone phosphate) and malonic semialdehyde (MSA or 3-oxopropanoate) from 6-phospho-5-dehydro-2-deoxy-D-gluconate (DKGP). The polypeptide is 6-phospho-5-dehydro-2-deoxy-D-gluconate aldolase (iolJ) (Bacillus licheniformis (strain ATCC 14580 / DSM 13 / JCM 2505 / CCUG 7422 / NBRC 12200 / NCIMB 9375 / NCTC 10341 / NRRL NRS-1264 / Gibson 46)).